The primary structure comprises 184 residues: uncharacterized protein (184 aa).

The protein to M.tuberculosis Rv0487.

This is an uncharacterized protein from Mycobacterium leprae (strain TN).